We begin with the raw amino-acid sequence, 793 residues long: Ferredoxin/F(420)H(2)-dependent CoB-CoM heterodisulfide reductase subunit A (793 aa).

147 to 170 (GGGVAGIEAALNLAEAGFPVTMVE) is an FAD binding site. 4Fe-4S ferredoxin-type domains are found at residues 233 to 264 (RKPRFVLEDKCKGCVDLCSGVCPVEIENPMNY), 282 to 311 (QVVLIDPDHCVGCGLCQLACPAEAVDYEQK), 571 to 600 (MGAHVDPDKCIGCRTCVEVCKFGKISIENK), and 601 to 629 (KAVVDEVSCYGCGDCSAACPVGAIQMRNF). Residues C243, C246, C250, C254, C291, C294, C297, C301, C580, C583, C586, C590, C609, C612, C615, and C619 each contribute to the [4Fe-4S] cluster site.

It belongs to the HdrA family. As to quaternary structure, the ferredoxin/F(420)H(2)-dependent CoB-CoM heterodisulfide reductase is composed of three subunits; HdrA2, HdrB2 and HdrC2. Requires [4Fe-4S] cluster as cofactor. The cofactor is [2Fe-2S] cluster. It depends on FAD as a cofactor.

The protein localises to the cytoplasm. The enzyme catalyses coenzyme B + coenzyme M + 2 oxidized [2Fe-2S]-[ferredoxin] = coenzyme M-coenzyme B heterodisulfide + 2 reduced [2Fe-2S]-[ferredoxin] + 2 H(+). The catalysed reaction is coenzyme B + 2 oxidized coenzyme F420-(gamma-L-Glu)(n) + coenzyme M + 2 reduced [2Fe-2S]-[ferredoxin] + 4 H(+) = coenzyme M-coenzyme B heterodisulfide + 2 reduced coenzyme F420-(gamma-L-Glu)(n) + 2 oxidized [2Fe-2S]-[ferredoxin]. Its pathway is cofactor metabolism; coenzyme M-coenzyme B heterodisulfide reduction; coenzyme B and coenzyme M from coenzyme M-coenzyme B heterodisulfide: step 1/1. In terms of biological role, part of a complex that catalyzes the reversible reduction of CoM-S-S-CoB to the thiol-coenzymes H-S-CoM (coenzyme M) and H-S-CoB (coenzyme B). Catalyzes the transfer of electrons from ferredoxin to CoM-S-S-CoB during methanogenesis from acetate. Electrons transfer from ferredoxin to CoM-S-S-CoB via HdrA2, HdrC2 and HdrB2. In addition, the complex can use electron bifurcation to direct electron pairs from reduced coenzyme F420 towards the reduction of both ferredoxin and CoB-CoM heterodisulfide. This activity may take place during Fe(III)-dependent anaerobic methane oxidation. This is Ferredoxin/F(420)H(2)-dependent CoB-CoM heterodisulfide reductase subunit A from Methanosarcina acetivorans (strain ATCC 35395 / DSM 2834 / JCM 12185 / C2A).